The sequence spans 279 residues: MGNTMLLTLLLVVVAAYGQTPPPPEGFRWVKNESFSDEFDGEVLDTTKWYARSPYWVNGRPPATFRAGSVSVKEGKLQIKNSVLDGDKKYNIAGGAVASVAKDALYGYYEARMKASSISMSSTFWMKNKPDTKECPFEVQELDIVEVVGQQKTGWDFRTNLKSNTHIFYTDCDGEKTVKSAGGTEAKIDPPADEAYHVYGCWWVDANTIKIYLDGEYQFTMNPSTHFRDTPFNKPMYMHMVTETYNWETPPTPEELADDTKNTTYYDWVRSYTLLPVDQ.

Residues 1–18 (MGNTMLLTLLLVVVAAYG) form the signal peptide. Residues 19–277 (QTPPPPEGFR…WVRSYTLLPV (259 aa)) enclose the GH16 domain. Positions 56, 60, 141, 146, and 243 each coordinate substrate. Glu-141 (nucleophile) is an active-site residue. Catalysis depends on Glu-146, which acts as the Proton donor.

This sequence belongs to the glycosyl hydrolase 16 family.

Its subcellular location is the periplasm. It carries out the reaction Hydrolysis of beta-D-galactopyranose-(1-&gt;4)-alpha-L-galactopyranose-6-sulfate linkages in porphyran.. Its function is as follows. Cleaves the sulfated polysaccharide porphyran at the (1-&gt;4) linkages between beta-D-galactopyranose and alpha-L-galactopyranose-6-sulfate, forming mostly the disaccharide alpha-L-galactopyranose-6-sulfate-(1-&gt;3)-beta-D-galactose. In Zobellia galactanivorans (strain DSM 12802 / CCUG 47099 / CIP 106680 / NCIMB 13871 / Dsij), this protein is Beta-porphyranase E (porE).